The sequence spans 145 residues: Glutaconyl-CoA decarboxylase subunit gamma (145 aa).

Positions 52–82 (APAPAAAPAAAPAPAAKPAAAAPAGSVTVSA) are disordered. Residues 57-75 (AAPAAAPAPAAKPAAAAPA) are compositionally biased toward low complexity. Residues 77 to 145 (SVTVSAPMPG…VATGDVMVIL (69 aa)) enclose the Biotinyl-binding domain. N6-biotinyllysine is present on Lys-112.

In terms of assembly, heterooctamer consisting of two alpha, two beta, two gamma and two delta subunits. The cofactor is biotin.

It carries out the reaction (2E)-glutaconyl-CoA + Na(+)(in) + H(+) = (2E)-butenoyl-CoA + Na(+)(out) + CO2. The protein operates within amino-acid degradation; L-glutamate degradation via hydroxyglutarate pathway; crotonoyl-CoA from L-glutamate: step 5/5. In terms of biological role, biotin carrier subunit of the primary sodium pump glutaconyl-CoA decarboxylase (GCD). This Acidaminococcus fermentans (strain ATCC 25085 / DSM 20731 / CCUG 9996 / CIP 106432 / VR4) protein is Glutaconyl-CoA decarboxylase subunit gamma (gcdC).